Reading from the N-terminus, the 507-residue chain is uncharacterized protein (507 aa).

A run of 12 helical transmembrane segments spans residues 11–31, 97–117, 125–145, 149–169, 187–207, 209–229, 283–303, 326–346, 354–374, 388–408, 423–443, and 452–472; these read ILCF…IFPI, AWIA…YGHL, PVSF…GFAP, VFAV…IVFY, FFNW…CGYW, SAAI…LWLP, LFSS…WFST, FVQA…DLFI, LHQV…ALMI, LAII…WDAC, IGIG…PQMA, and IPYI…CFFL.

It belongs to the major facilitator superfamily.

The protein resides in the membrane. This is an uncharacterized protein from Caenorhabditis elegans.